A 158-amino-acid chain; its full sequence is MENQKQYPMTQEGFEKLERELEELKTVKRPEVVEKIKVARSFGDLSENSEYDAAKDEQGFIEQDIQRIEHMLRNALIIEDTGDNNVVKIGKTVTFVELPGDEEESYQIVGSAESDAFNGKISNESPMAKALIGKGLDDEVRVPLPNGGEMNVKIVNIQ.

Residues 4-70 adopt a coiled-coil conformation; the sequence is QKQYPMTQEG…IEQDIQRIEH (67 aa).

It belongs to the GreA/GreB family.

Its function is as follows. Necessary for efficient RNA polymerase transcription elongation past template-encoded arresting sites. The arresting sites in DNA have the property of trapping a certain fraction of elongating RNA polymerases that pass through, resulting in locked ternary complexes. Cleavage of the nascent transcript by cleavage factors such as GreA or GreB allows the resumption of elongation from the new 3'terminus. GreA releases sequences of 2 to 3 nucleotides. The sequence is that of Transcription elongation factor GreA from Staphylococcus aureus (strain Mu3 / ATCC 700698).